A 584-amino-acid chain; its full sequence is MPETIGVFVAWPYANGDLHLGHVAGVYIPADTFARYHRLRGNRVLMVSGSDAHGTPITVAAEREGVTPEDIFRRYHGRFLETYQQLGISFDLFTHTHTANHFRVAQDIFRTLYEKGYIFTQTQIQLYCEYDRRFLPDRYVEGTCPYCGYPNARGDQCDNCGRTLDAIDLIDPRCRLCGQRPLPRETEHFFFDLPAFTDRLLAYLERQTHWRPNVQHFVRNFIQDGLKPRPVSRDLEWGIPLPIPGYEHKVMYVWFEAVIGYLSASIEWSLAEGQPEVWQVWWRDPRARGYYFIGKDNIPFHAIIWPAELMGYDESLNLPYDIPANEFLNLEGQQFSTSRNWAIWVPDFLSRYAPDPLRDYLTSIAPETRDSEFTWQGFVERNNNELLATWGNLVHRILTFVQARFEGRVPEPGALDGRDHLLLDQIAAGFQRIGDLYARVELKAAQREAMALAREVNRYLDEKAPWFQIREDRAAAATTLFVALRAIDSLKLLLAPILPFTSEQLHRLLGYRDRLFGDIVIEPGPETGGHEVLRYRPAASEGRDRWAPSELEAGRPLPPPQPLYQKLEESVIEEERQRLLAQSR.

The short motif at 12 to 22 (PYANGDLHLGH) is the 'HIGH' region element. Positions 144, 147, 157, and 160 each coordinate Zn(2+). The 'KMSKS' region motif lies at 334-338 (QFSTS). Residue Thr337 coordinates ATP. The disordered stretch occupies residues 541–563 (EGRDRWAPSELEAGRPLPPPQPL).

The protein belongs to the class-I aminoacyl-tRNA synthetase family. MetG type 1 subfamily. Monomer. The cofactor is Zn(2+).

The protein resides in the cytoplasm. It carries out the reaction tRNA(Met) + L-methionine + ATP = L-methionyl-tRNA(Met) + AMP + diphosphate. Is required not only for elongation of protein synthesis but also for the initiation of all mRNA translation through initiator tRNA(fMet) aminoacylation. The sequence is that of Methionine--tRNA ligase from Thermomicrobium roseum (strain ATCC 27502 / DSM 5159 / P-2).